Consider the following 77-residue polypeptide: U10-lycotoxin-Ls1d (77 aa).

Residues 1–20 form the signal peptide; the sequence is MKLIIFTGLFLFAIVSLIEA. A propeptide spanning residues 21-26 is cleaved from the precursor; sequence EEESGR.

The protein belongs to the neurotoxin 19 (CSTX) family. 09 (U10-Lctx) subfamily. Post-translationally, contains 4 disulfide bonds. In terms of tissue distribution, expressed by the venom gland.

It localises to the secreted. In Lycosa singoriensis (Wolf spider), this protein is U10-lycotoxin-Ls1d.